The primary structure comprises 341 residues: Glycerol-3-phosphate dehydrogenase [NAD(P)+] (341 aa).

NADPH is bound by residues S11, W12, R32, and K106. The sn-glycerol 3-phosphate site is built by K106, G137, and T139. A141 serves as a coordination point for NADPH. The sn-glycerol 3-phosphate site is built by K192, D245, S255, R256, and N257. The active-site Proton acceptor is the K192. An NADPH-binding site is contributed by R256. NADPH is bound by residues V280 and E282.

This sequence belongs to the NAD-dependent glycerol-3-phosphate dehydrogenase family.

The protein resides in the cytoplasm. It catalyses the reaction sn-glycerol 3-phosphate + NAD(+) = dihydroxyacetone phosphate + NADH + H(+). It carries out the reaction sn-glycerol 3-phosphate + NADP(+) = dihydroxyacetone phosphate + NADPH + H(+). Its pathway is membrane lipid metabolism; glycerophospholipid metabolism. In terms of biological role, catalyzes the reduction of the glycolytic intermediate dihydroxyacetone phosphate (DHAP) to sn-glycerol 3-phosphate (G3P), the key precursor for phospholipid synthesis. The chain is Glycerol-3-phosphate dehydrogenase [NAD(P)+] from Exiguobacterium sp. (strain ATCC BAA-1283 / AT1b).